Here is a 207-residue protein sequence, read N- to C-terminus: Urease accessory protein UreE (207 aa).

Residues 170–194 are compositionally biased toward basic and acidic residues; sequence EHHGHSHSHSHDHDHDHDHDHDHQH. Residues 170–207 form a disordered region; it reads EHHGHSHSHSHDHDHDHDHDHDHQHGPCCSHGHHHGHR.

The protein belongs to the UreE family.

It is found in the cytoplasm. Its function is as follows. Involved in urease metallocenter assembly. Binds nickel. Probably functions as a nickel donor during metallocenter assembly. This Burkholderia pseudomallei (strain 1106a) protein is Urease accessory protein UreE.